A 184-amino-acid chain; its full sequence is Peptide deformylase 2 (184 aa).

2 residues coordinate Fe cation: Cys110 and His153. Glu154 is an active-site residue. His157 contacts Fe cation.

This sequence belongs to the polypeptide deformylase family. Requires Fe(2+) as cofactor.

The catalysed reaction is N-terminal N-formyl-L-methionyl-[peptide] + H2O = N-terminal L-methionyl-[peptide] + formate. Its function is as follows. Removes the formyl group from the N-terminal Met of newly synthesized proteins. Requires at least a dipeptide for an efficient rate of reaction. N-terminal L-methionine is a prerequisite for activity but the enzyme has broad specificity at other positions. The polypeptide is Peptide deformylase 2 (Geobacillus stearothermophilus (Bacillus stearothermophilus)).